Here is a 298-residue protein sequence, read N- to C-terminus: Probable GTP 3',8-cyclase (298 aa).

The Radical SAM core domain maps to 4–221 (RYGREIRSFR…VFTRKFMQNR (218 aa)). Position 13 (R13) interacts with GTP. Positions 20 and 24 each coordinate [4Fe-4S] cluster. Y26 is an S-adenosyl-L-methionine binding site. A [4Fe-4S] cluster-binding site is contributed by C27. A GTP-binding site is contributed by K61. An S-adenosyl-L-methionine-binding site is contributed by G65. T91 is a GTP binding site. Residue S115 coordinates S-adenosyl-L-methionine. Residue K152 participates in GTP binding. 2 residues coordinate [4Fe-4S] cluster: C243 and C246. Residue 248 to 250 (RIR) coordinates GTP. Residue C260 coordinates [4Fe-4S] cluster.

The protein belongs to the radical SAM superfamily. MoaA family. [4Fe-4S] cluster is required as a cofactor.

It carries out the reaction GTP + AH2 + S-adenosyl-L-methionine = (8S)-3',8-cyclo-7,8-dihydroguanosine 5'-triphosphate + 5'-deoxyadenosine + L-methionine + A + H(+). It functions in the pathway cofactor biosynthesis; molybdopterin biosynthesis. Functionally, catalyzes the cyclization of GTP to (8S)-3',8-cyclo-7,8-dihydroguanosine 5'-triphosphate. The chain is Probable GTP 3',8-cyclase from Methanococcus maripaludis (strain C7 / ATCC BAA-1331).